The chain runs to 752 residues: Iron-sulfur clusters transporter ABCB7, mitochondrial (752 aa).

The N-terminal 22 residues, 1–22 (MALLAMHSWRWAAAAAAFEKRR), are a transit peptide targeting the mitochondrion. The Mitochondrial matrix portion of the chain corresponds to 23–140 (HSAILIRPLV…KDRPDLRARV (118 aa)). Residues 140–436 (VAISLGFLGG…LGTVYRETRQ (297 aa)) form the ABC transmembrane type-1 domain. Residues 141–161 (AISLGFLGGAKAMNIVVPFMF) traverse the membrane as a helical segment. At 162–185 (KYAVDSLNQMSGNMLNLSDAPNTV) the chain is on the mitochondrial intermembrane side. Residues 186 to 206 (ATMATAVLIGYGVSRAGAAFF) form a helical membrane-spanning segment. The Mitochondrial matrix segment spans residues 207–259 (NEVRNAVFGKVAQNSIRRIAKNVFLHLHNLDLGFHLSRQTGALSKAIDRGTRG). N6-acetyllysine occurs at positions 216 and 251. The helical transmembrane segment at 260 to 280 (ISFVLSALVFNLLPIMFEVML) threads the bilayer. Topologically, residues 281-290 (VSGVLYYKCG) are mitochondrial intermembrane. The chain crosses the membrane as a helical span at residues 291-311 (AQFALVTLGTLGTYTAFTVAV). Residues 312–382 (TRWRTRFRIE…TLAMLNFGQS (71 aa)) are Mitochondrial matrix-facing. A glutathione-binding site is contributed by 315-319 (RTRFR). The residue at position 336 (Ser-336) is a Phosphoserine. Tyr-340 carries the phosphotyrosine modification. Thr-342 is modified (phosphothreonine). A glutathione-binding site is contributed by 378 to 381 (NFGQ). The helical transmembrane segment at 383-403 (AIFSVGLTAIMVLASQGIVAG) threads the bilayer. Over 404 to 409 (TLTVGD) the chain is Mitochondrial intermembrane. Residues 410-430 (LVMVNGLLFQLSLPLNFLGTV) form a helical membrane-spanning segment. Gly-428 serves as a coordination point for glutathione. The Mitochondrial matrix segment spans residues 431-752 (YRETRQALID…SVKGCGNCSC (322 aa)). One can recognise an ABC transporter domain in the interval 472 to 706 (VAFDNVHFEY…PHSIYSEMWH (235 aa)). ATP contacts are provided by residues Tyr-481 and 505–516 (GGSGSGKSTIVR).

The protein belongs to the ABC transporter superfamily. ABCB family. Heavy Metal importer (TC 3.A.1.210) subfamily. Homodimer or heterodimer. Interacts with C10orf88/PAAT. Forms a complex with ABCB10 and FECH, where a dimeric FECH bridges ABCB7 and ABCB10 homodimers; this complex may be required for cellular iron homeostasis, mitochondrial function and heme biosynthesis. Interacts with FECH. Interacts with ATP5F1A. Interacts with COX4I1; this interaction allows the regulation of cellular iron homeostasis and cellular reactive oxygen species (ROS) levels in cardiomyocytes.

Its subcellular location is the mitochondrion inner membrane. The catalysed reaction is (glutathione)4[2Fe(III)-2S] cluster(in) + ATP + H2O = (glutathione)4[2Fe(III)-2S] cluster(out) + ADP + phosphate + H(+). ATPase activity is stimulated by glutathione. Its function is as follows. Exports glutathione-coordinated iron-sulfur clusters such as [2Fe-2S]-(GS)4 cluster from the mitochondria to the cytosol in an ATP-dependent manner allowing the assembly of the cytosolic iron-sulfur (Fe/S) cluster-containing proteins and participates in iron homeostasis. Moreover, through a functional complex formed of ABCB7, FECH and ABCB10, also plays a role in the cellular iron homeostasis, mitochondrial function and heme biosynthesis. In cardiomyocytes, regulates cellular iron homeostasis and cellular reactive oxygen species (ROS) levels through its interaction with COX4I1. May also play a role in hematopoiesis. The polypeptide is Iron-sulfur clusters transporter ABCB7, mitochondrial (Homo sapiens (Human)).